The primary structure comprises 827 residues: Tuftelin-interacting protein 11 (827 aa).

Disordered stretches follow at residues 31–129 and 179–203; these read FNPH…KGFV and QRKG…DFPV. Residues 41-60 show a composition bias toward basic and acidic residues; the sequence is TKEEATYGVWAERDSDEERP. Positions 88–98 are enriched in acidic residues; sequence DVSDEDSDEDE. The span at 99–112 shows a compositional bias: basic and acidic residues; it reads KPVKQEEIPKEFVP. The G-patch domain maps to 145–191; the sequence is TKGIGQKLLQKMGYVPGRGLGKNAQGIINPIEAKQRKGKGAVGAYGS.

This sequence belongs to the TFP11/STIP family. As to quaternary structure, identified in the spliceosome C complex.

The protein localises to the nucleus. Functionally, involved in pre-mRNA splicing, specifically in spliceosome disassembly during late-stage splicing events. In Gallus gallus (Chicken), this protein is Tuftelin-interacting protein 11 (TFIP11).